A 196-amino-acid polypeptide reads, in one-letter code: N-(5'-phosphoribosyl)anthranilate isomerase (196 aa).

Belongs to the TrpF family.

It carries out the reaction N-(5-phospho-beta-D-ribosyl)anthranilate = 1-(2-carboxyphenylamino)-1-deoxy-D-ribulose 5-phosphate. It functions in the pathway amino-acid biosynthesis; L-tryptophan biosynthesis; L-tryptophan from chorismate: step 3/5. This chain is N-(5'-phosphoribosyl)anthranilate isomerase, found in Sulfurovum sp. (strain NBC37-1).